A 290-amino-acid chain; its full sequence is Syntaxin (290 aa).

The tract at residues 1-22 (MTKDRLAALKAAQSDDDDNDDV) is disordered. Residues 1-267 (MTKDRLAALK…KYQSKARRKK (267 aa)) are Cytoplasmic-facing. A coiled-coil region spans residues 32-114 (MEEFFEQVDE…EEHTNKSSAD (83 aa)). Positions 194 to 256 (LADIEARHND…ETAKMDTKKA (63 aa)) constitute a t-SNARE coiled-coil homology domain. A helical; Anchor for type IV membrane protein membrane pass occupies residues 268 to 288 (IMILVCLAILIIILVGVIGGT). At 289–290 (LG) the chain is on the extracellular side.

This sequence belongs to the syntaxin family.

It localises to the membrane. Functionally, potentially involved in docking of synaptic vesicles at presynaptic active zones. The sequence is that of Syntaxin from Aplysia californica (California sea hare).